A 520-amino-acid chain; its full sequence is Versicolorin B desaturase (520 aa).

A helical membrane pass occupies residues 22–42 (IFTTILSIFGIALSAVAAWGI). N-linked (GlcNAc...) asparagine glycosylation is found at asparagine 266 and asparagine 426. Cysteine 462 is a binding site for heme.

This sequence belongs to the cytochrome P450 family. The cofactor is heme.

The protein resides in the membrane. The catalysed reaction is versicolorin B + NADPH + O2 + H(+) = versicolorin A + NADP(+) + 2 H2O. It functions in the pathway mycotoxin biosynthesis. Functionally, versicolorin B desaturase; part of the fragmented gene cluster that mediates the biosynthesis of dothistromin (DOTH), a polyketide toxin very similar in structure to the aflatoxin precursor, versicolorin B. The first step of the pathway is the conversion of acetate to norsolorinic acid (NOR) and requires the fatty acid synthase subunits hexA and hexB, as well as the polyketide synthase pksA. PksA combines a hexanoyl starter unit and 7 malonyl-CoA extender units to synthesize the precursor NOR. The hexanoyl starter unit is provided to the acyl-carrier protein (ACP) domain by the fungal fatty acid synthase hexA/hexB. The second step is the conversion of NOR to averantin (AVN) and requires the norsolorinic acid ketoreductase nor1, which catalyzes the dehydration of norsolorinic acid to form (1'S)-averantin. The cytochrome P450 monooxygenase avnA then catalyzes the hydroxylation of AVN to 5'hydroxyaverantin (HAVN). The next step is performed by adhA that transforms HAVN to averufin (AVF). Averufin might then be converted to hydroxyversicolorone by cypX and avfA. Hydroxyversicolorone is further converted versiconal hemiacetal acetate (VHA) by moxY. VHA is then the substrate for the versiconal hemiacetal acetate esterase est1 to yield versiconal (VAL). Versicolorin B synthase vbsA then converts VAL to versicolorin B (VERB) by closing the bisfuran ring. Then, the activity of the versicolorin B desaturase verB leads to versicolorin A (VERA). DotB, a predicted chloroperoxidase, may perform epoxidation of the A-ring of VERA. Alternatively, a cytochrome P450, such as cypX or avnA could catalyze this step. It is also possible that another, uncharacterized, cytochrome P450 enzyme is responsible for this step. Opening of the epoxide could potentially be achieved by the epoxide hydrolase epoA. However, epoA seems not to be required for DOTH biosynthesis, but other epoxide hydrolases may have the ability to complement this hydrolysis. Alternatively, opening of the epoxide ring could be achieved non-enzymatically. The next step is the deoxygenation of ring A to yield the 5,8-dihydroxyanthraquinone which is most likely catalyzed by the NADPH dehydrogenase encoded by ver1. The last stages of DOTH biosynthesis are proposed to involve hydroxylation of the bisfuran. OrdB and norB might have oxidative roles here. An alternative possibility is that cytochrome P450 monoogenases such as avnA and cypX might perform these steps in addition to previously proposed steps. This Dothistroma septosporum (strain NZE10 / CBS 128990) (Red band needle blight fungus) protein is Versicolorin B desaturase.